Here is a 586-residue protein sequence, read N- to C-terminus: Malonate--CoA ligase ACSF3, mitochondrial (586 aa).

The transit peptide at Met1–Cys89 directs the protein to the mitochondrion. ATP is bound by residues Thr203–Lys211, Asp457, Arg471, and Lys563.

This sequence belongs to the ATP-dependent AMP-binding enzyme family.

It localises to the mitochondrion. The enzyme catalyses tetracosanoate + ATP + CoA = tetracosanoyl-CoA + AMP + diphosphate. It catalyses the reaction malonate + ATP + CoA = malonyl-CoA + AMP + diphosphate. Catalyzes the initial reaction in intramitochondrial fatty acid synthesis, by activating malonate and methylmalonate, but not acetate, into their respective CoA thioester. May have some preference toward very-long-chain substrates. In Bos taurus (Bovine), this protein is Malonate--CoA ligase ACSF3, mitochondrial.